The sequence spans 460 residues: GTPase Der (460 aa).

EngA-type G domains lie at 2–164 (QSII…HEEF) and 196–368 (IRVG…ENFT). GTP is bound by residues 8 to 15 (GKPNVGKS), 55 to 59 (DSGGL), 116 to 119 (NKVD), 202 to 209 (GRVNVGKS), 249 to 253 (DTAGI), and 313 to 316 (NKWD). The 85-residue stretch at 369–453 (QKIQTSKLNT…PLVIASRKKG (85 aa)) folds into the KH-like domain.

It belongs to the TRAFAC class TrmE-Era-EngA-EngB-Septin-like GTPase superfamily. EngA (Der) GTPase family. In terms of assembly, associates with the 50S ribosomal subunit.

GTPase that plays an essential role in the late steps of ribosome biogenesis. The sequence is that of GTPase Der from Campylobacter jejuni subsp. jejuni serotype O:2 (strain ATCC 700819 / NCTC 11168).